A 618-amino-acid chain; its full sequence is DNA mismatch repair protein MutL (618 aa).

Belongs to the DNA mismatch repair MutL/HexB family.

In terms of biological role, this protein is involved in the repair of mismatches in DNA. It is required for dam-dependent methyl-directed DNA mismatch repair. May act as a 'molecular matchmaker', a protein that promotes the formation of a stable complex between two or more DNA-binding proteins in an ATP-dependent manner without itself being part of a final effector complex. The protein is DNA mismatch repair protein MutL of Bradyrhizobium sp. (strain BTAi1 / ATCC BAA-1182).